The sequence spans 261 residues: Small ribosomal subunit protein eS1z (261 aa).

Positions 1 to 18 (MAVGKNKRISKGKKGGKK) are enriched in basic residues. A disordered region spans residues 1-20 (MAVGKNKRISKGKKGGKKKA).

The protein belongs to the eukaryotic ribosomal protein eS1 family. Component of the small ribosomal subunit. Mature ribosomes consist of a small (40S) and a large (60S) subunit. The 40S subunit contains about 33 different proteins and 1 molecule of RNA (18S). The 60S subunit contains about 49 different proteins and 3 molecules of RNA (25S, 5.8S and 5S).

It localises to the cytoplasm. This Vitis vinifera (Grape) protein is Small ribosomal subunit protein eS1z.